Reading from the N-terminus, the 244-residue chain is 14-3-3 protein beta/alpha-B (244 aa).

The residue at position 1 (Met1) is an N-acetylmethionine.

This sequence belongs to the 14-3-3 family. Homodimer, and heterodimer with other family members.

Its subcellular location is the cytoplasm. Adapter protein implicated in the regulation of a large spectrum of both general and specialized signaling pathways. Binds to a large number of partners, usually by recognition of a phosphoserine or phosphothreonine motif. Binding generally results in the modulation of the activity of the binding partner. In Xenopus laevis (African clawed frog), this protein is 14-3-3 protein beta/alpha-B (ywhab-b).